We begin with the raw amino-acid sequence, 123 residues long: UPF0738 protein BALH_1059 (123 aa).

It belongs to the UPF0738 family.

This chain is UPF0738 protein BALH_1059, found in Bacillus thuringiensis (strain Al Hakam).